A 238-amino-acid polypeptide reads, in one-letter code: 15,16-dihydrobiliverdin:ferredoxin oxidoreductase (238 aa).

The protein belongs to the HY2 family.

It catalyses the reaction 15,16-dihydrobiliverdin + oxidized 2[4Fe-4S]-[ferredoxin] = biliverdin IXalpha + reduced 2[4Fe-4S]-[ferredoxin] + 2 H(+). Catalyzes the two-electron reduction of biliverdin IX-alpha at the C15 methine bridge. This Prochlorococcus marinus (strain NATL2A) protein is 15,16-dihydrobiliverdin:ferredoxin oxidoreductase.